The following is a 99-amino-acid chain: UPF0235 protein Cag_0319 (99 aa).

The protein belongs to the UPF0235 family.

This is UPF0235 protein Cag_0319 from Chlorobium chlorochromatii (strain CaD3).